A 174-amino-acid polypeptide reads, in one-letter code: Shikimate kinase (174 aa).

Residue 14 to 19 (GAGKST) coordinates ATP. S18 lines the Mg(2+) pocket. Residues D36, R60, and G82 each coordinate substrate. R120 contacts ATP. R141 is a binding site for substrate. R158 contacts ATP.

This sequence belongs to the shikimate kinase family. As to quaternary structure, monomer. The cofactor is Mg(2+).

It localises to the cytoplasm. The catalysed reaction is shikimate + ATP = 3-phosphoshikimate + ADP + H(+). It functions in the pathway metabolic intermediate biosynthesis; chorismate biosynthesis; chorismate from D-erythrose 4-phosphate and phosphoenolpyruvate: step 5/7. Functionally, catalyzes the specific phosphorylation of the 3-hydroxyl group of shikimic acid using ATP as a cosubstrate. The protein is Shikimate kinase of Buchnera aphidicola subsp. Baizongia pistaciae (strain Bp).